The sequence spans 710 residues: Adenylosuccinate synthetase (710 aa).

2 disordered regions span residues 1–53 (MPVR…PQEA) and 84–110 (DEPPHGSQKPLSVAPYTANASNSSGRS). 2 stretches are compositionally biased toward polar residues: residues 10-27 (YNNSSPGVSNALSPSTTA) and 101-110 (ANASNSSGRS). GTP contacts are provided by residues 180–186 (GDEGKGK) and 210–212 (GHT). The Proton acceptor role is filled by aspartate 181. Positions 181 and 210 each coordinate Mg(2+). IMP-binding positions include 181 to 184 (DEGK), 208 to 211 (NAGH), threonine 295, lysine 309, glutamine 421, threonine 437, and lysine 567. Residue histidine 211 is the Proton donor of the active site. 563-569 (AVTKKPR) contributes to the substrate binding site. GTP is bound by residues arginine 569 and 697–699 (GNG).

This sequence belongs to the adenylosuccinate synthetase family. In terms of assembly, homodimer. Requires Mg(2+) as cofactor.

The protein resides in the cytoplasm. It carries out the reaction IMP + L-aspartate + GTP = N(6)-(1,2-dicarboxyethyl)-AMP + GDP + phosphate + 2 H(+). Its pathway is purine metabolism; AMP biosynthesis via de novo pathway; AMP from IMP: step 1/2. Its function is as follows. Plays an important role in the salvage pathway for purine nucleotide biosynthesis. Catalyzes the first committed step in the biosynthesis of AMP from IMP. This Leishmania donovani protein is Adenylosuccinate synthetase (ADSS).